The primary structure comprises 210 residues: Cell division protein SepF (210 aa).

The interval Gly-13–Met-78 is disordered. The segment covering Tyr-22–Asp-31 has biased composition (acidic residues). Residues Arg-47–Met-60 show a composition bias toward basic and acidic residues. The span at Val-64 to Met-78 shows a compositional bias: polar residues.

The protein belongs to the SepF family. In terms of assembly, homodimer. Interacts with FtsZ.

The protein resides in the cytoplasm. Functionally, cell division protein that is part of the divisome complex and is recruited early to the Z-ring. Probably stimulates Z-ring formation, perhaps through the cross-linking of FtsZ protofilaments. Its function overlaps with FtsA. This is Cell division protein SepF from Cyanothece sp. (strain PCC 7425 / ATCC 29141).